The sequence spans 174 residues: UPF0340 protein SAB1998c (174 aa).

Belongs to the UPF0340 family.

In Staphylococcus aureus (strain bovine RF122 / ET3-1), this protein is UPF0340 protein SAB1998c.